The primary structure comprises 601 residues: Nuclear receptor subfamily 2 group C member 1 (601 aa).

A required for interaction with KAT2B region spans residues 1 to 179 (MATIEEIAHQ…RLQRCIAFGM (179 aa)). A DNA-binding region (nuclear receptor) is located at residues 111–186 (FDLCVVCGDK…FGMKQDSVQC (76 aa)). 2 consecutive NR C4-type zinc fingers follow at residues 114 to 134 (CVVCGDKASGRHYGAVTCEGC) and 150 to 169 (CRGSKDCIINKHHRNRCQYC). Residues S198 and S216 each carry the phosphoserine modification. Position 221 is a phosphothreonine (T221). At T223 the chain carries Phosphothreonine; by MAPK1. K251 participates in a covalent cross-link: Glycyl lysine isopeptide (Lys-Gly) (interchain with G-Cter in SUMO); alternate. K251 participates in a covalent cross-link: Glycyl lysine isopeptide (Lys-Gly) (interchain with G-Cter in SUMO2); alternate. One can recognise an NR LBD domain in the interval 349 to 591 (GSVHLITGDS…SVIPHILKME (243 aa)). Position 582 is a phosphoserine; by PKC (S582). Positions 585–601 (PHILKMEPGQYSKTSSL) are required for interaction with NRIP1. A Glycyl lysine isopeptide (Lys-Gly) (interchain with G-Cter in SUMO2) cross-link involves residue K589.

This sequence belongs to the nuclear hormone receptor family. NR2 subfamily. As to quaternary structure, homodimer. Heterodimer; with NR2C2 which is required for chromatin remodeling and for binding to promoter regions such as globin DR1 repeats. Interacts with ESR1; the interaction prevents homodimerization of ESR1 and suppresses its transcriptional activity and cell growth. Interacts with NRIP1 (via its LXXLL motifs); the interaction provides corepressor activity. Interacts with HDAC3 (via the DNA-binding domain); the interaction recruits phosphorylated NR2C1 to PML bodies for sumoylation. Interacts with HDAC4 (via the DNA-binding domain). Interacts with PIAS1; the interaction is required for sumoylation of NR2C1. Interacts with UBE2I; the interaction is required for sumoylation of NR2C1. Interacts with KAT2B; the interaction acts as a corepressor of gene expression. Post-translationally, sumoylation requires both PIAS1 and UBE2I. Sumoylation appears to dissociate NR2C1 from the PML nuclear bodies. Enhances the interaction with NRIP1 but inhibits interaction with KAT2B. In proliferating cells, stimulation by all-trans retinoic acid, activation of MAPK1-mediated phosphorylation and recruitment to PML bodies with subsequent sumoylation, suppresses OCT4 expression. Phosphorylated on several serine and threonine residues. Phosphorylation on Thr-223, stimulated by all-trans retinoic acid (atRA) mediates PML location and sumoylation in proliferating cells which then modulates its association with effector molecules, KAT2B and NRIP1. Phosphorylation on Ser-582 by PKC is important for protein stability and function as activator of RARB.

It localises to the nucleus. The protein localises to the PML body. Functionally, orphan nuclear receptor. Binds the IR7 element in the promoter of its own gene in an autoregulatory negative feedback mechanism. Primarily repressor of a broad range of genes including ESR1 and RARB. Together with NR2C2, forms the core of the DRED (direct repeat erythroid-definitive) complex that represses embryonic and fetal globin transcription. Binds to hormone response elements (HREs) consisting of two 5'-AGGTCA-3' half site direct repeat consensus sequences. Also activator of OCT4 gene expression. Plays a fundamental role in early embryogenesis and regulates embryonic stem cell proliferation and differentiation. Mediator of retinoic acid-regulated preadipocyte proliferation. This Pongo abelii (Sumatran orangutan) protein is Nuclear receptor subfamily 2 group C member 1 (NR2C1).